A 60-amino-acid chain; its full sequence is Movement protein TGBp3 (60 aa).

Residues M1–W6 are Lumenal-facing. A helical transmembrane segment spans residues V7–K23. The Cytoplasmic segment spans residues P24–V60.

The protein belongs to the Tymovirales TGBp3 protein family.

Its subcellular location is the host endoplasmic reticulum membrane. Functionally, plays a role in viral cell-to-cell propagation, by facilitating genome transport to neighboring plant cells through plasmosdesmata. May induce the formation of granular vesicles derived from the Endoplasmic reticulum, which align on actin filaments. The protein is Movement protein TGBp3 of Citrus (ICRSV).